The primary structure comprises 201 residues: B-cell CLL/lymphoma 7 protein family member A (201 aa).

Positions 46–201 (YKWVPVTEPK…GKIDSSSEES (156 aa)) are disordered. A compositionally biased stretch (basic and acidic residues) spans 54-71 (PKSDDNKNKKKGKDDKYG). Composition is skewed to polar residues over residues 73–83 (EVTTPENSSSP), 93–114 (SNQSSIADSSPLKQETSNNTSP), and 133–142 (QYPSKQPSSG). A compositionally biased stretch (basic and acidic residues) spans 158–167 (TSKRDSKSQG). A compositionally biased stretch (polar residues) spans 168 to 179 (DSESFLDSSKSA). The span at 192 to 201 (GKIDSSSEES) shows a compositional bias: basic and acidic residues.

Belongs to the BCL7 family.

This Danio rerio (Zebrafish) protein is B-cell CLL/lymphoma 7 protein family member A (bcl7a).